Here is a 178-residue protein sequence, read N- to C-terminus: Large ribosomal subunit protein uL6 (178 aa).

It belongs to the universal ribosomal protein uL6 family. As to quaternary structure, part of the 50S ribosomal subunit.

This protein binds to the 23S rRNA, and is important in its secondary structure. It is located near the subunit interface in the base of the L7/L12 stalk, and near the tRNA binding site of the peptidyltransferase center. This is Large ribosomal subunit protein uL6 from Bacillus licheniformis (strain ATCC 14580 / DSM 13 / JCM 2505 / CCUG 7422 / NBRC 12200 / NCIMB 9375 / NCTC 10341 / NRRL NRS-1264 / Gibson 46).